We begin with the raw amino-acid sequence, 265 residues long: Speedy protein E12 (265 aa).

Residues 1 to 80 form a disordered region; that stretch reads MGQILGKIMM…EPEKELAPEP (80 aa). Positions 13–23 are enriched in low complexity; that stretch reads QPQPQEEQSPQ. The span at 66 to 80 shows a compositional bias: acidic residues; that stretch reads DESDDEPEKELAPEP.

The protein belongs to the Speedy/Ringo family.

The polypeptide is Speedy protein E12 (Homo sapiens (Human)).